The primary structure comprises 341 residues: tRNA-specific 2-thiouridylase MnmA (341 aa).

Residues 8-15 (GMSGGVDS) and methionine 34 contribute to the ATP site. Cysteine 94 functions as the Nucleophile in the catalytic mechanism. The cysteines at positions 94 and 188 are disulfide-linked. An ATP-binding site is contributed by glycine 118. The interaction with tRNA stretch occupies residues 136-138 (KDQ). Catalysis depends on cysteine 188, which acts as the Cysteine persulfide intermediate. The tract at residues 290-291 (RY) is interaction with tRNA.

Belongs to the MnmA/TRMU family.

It localises to the cytoplasm. The catalysed reaction is S-sulfanyl-L-cysteinyl-[protein] + uridine(34) in tRNA + AH2 + ATP = 2-thiouridine(34) in tRNA + L-cysteinyl-[protein] + A + AMP + diphosphate + H(+). Catalyzes the 2-thiolation of uridine at the wobble position (U34) of tRNA, leading to the formation of s(2)U34. The polypeptide is tRNA-specific 2-thiouridylase MnmA (Sulfurimonas denitrificans (strain ATCC 33889 / DSM 1251) (Thiomicrospira denitrificans (strain ATCC 33889 / DSM 1251))).